The chain runs to 408 residues: Metacaspase-1B (408 aa).

The disordered stretch occupies residues 1–98 (MYHRHSAPPP…PPLEAQQFGN (98 aa)). Pro residues-rich tracts occupy residues 24–49 (WPPPQPYEYPPYPPQGPPPAHTFPPP) and 56–66 (SPYPTPPPHSP). Residues His-199 and Cys-255 contribute to the active site.

It belongs to the peptidase C14B family.

Its function is as follows. Involved in cell death (apoptosis). Required for the apoptotic-like loss of membrane phospholipid asymmetry at stationary phase and facilitates growth under conditions of endoplasmic reticulum stress. The chain is Metacaspase-1B (casB) from Aspergillus fumigatus (strain CBS 144.89 / FGSC A1163 / CEA10) (Neosartorya fumigata).